The sequence spans 464 residues: 3-isopropylmalate dehydratase large subunit (464 aa).

C337, C397, and C400 together coordinate [4Fe-4S] cluster.

Belongs to the aconitase/IPM isomerase family. LeuC type 1 subfamily. Heterodimer of LeuC and LeuD. It depends on [4Fe-4S] cluster as a cofactor.

The enzyme catalyses (2R,3S)-3-isopropylmalate = (2S)-2-isopropylmalate. It functions in the pathway amino-acid biosynthesis; L-leucine biosynthesis; L-leucine from 3-methyl-2-oxobutanoate: step 2/4. Its function is as follows. Catalyzes the isomerization between 2-isopropylmalate and 3-isopropylmalate, via the formation of 2-isopropylmaleate. This chain is 3-isopropylmalate dehydratase large subunit, found in Bacillus cereus (strain ATCC 10987 / NRS 248).